The sequence spans 563 residues: MLVEEKKSGIIDSILERLGINEAPLFRTPDYMYNISYWLGAMVAASFAYTIITGLFLLLYYQPAFAYQSTQTIINSVPYGSVLLFSHLYGSYIMILLAYIHMFRNFYKGAYKKPRELQWVTGVLLLALTLGASFFGYSLVSDVLGVNAIDIGDQLLVGTGIPGATAIVGWLFGPGGSAALSSNPLVRSELFDRLLGWHIIMVFLLGVLFLFHFMLSERYGMTPATREKPKVPSYYTKEEQEKFNPWWPRNFVYMLSIVLITWGIILFVPNLLANINGLPIVINPYPAPQAGSPQAVSVQPYPPWFFLFLFKLVDFLLPNGIPITPILTIALLVVGLVILMLLPFLDPSDSLYVTRRKFWTWIMTTLAVYLVELSVWGYLEPGVPEPTSAQIEFLGPPLVIIGIIVYLWPTERKTKTVSTTATDSRVIKMNITPMEILLGAVGTLSFAATLFNFIQFPTLINGIILVPLGLFAIYALRRISFYVLGGKPVASVGNTSSRISLRKKIAFFGIIALFVVSLVLLGLMWTLPSVGPQATYAGMDLGVILLLWGVAIQLYHYEIFVKE.

12 consecutive transmembrane segments (helical) span residues 36-61, 81-104, 119-141, 193-220, 255-276, 326-345, 358-379, 387-409, 436-454, 458-476, 505-527, and 539-557; these read SYWLGAMVAASFAYTIITGLFLLLYY, SVLLFSHLYGSYIMILLAYIHMFR, WVTGVLLLALTLGASFFGYSLVS, RLLGWHIIMVFLLGVLFLFHFMLSERYG, LSIVLITWGIILFVPNLLANIN, ILTIALLVVGLVILMLLPFL, FWTWIMTTLAVYLVELSVWGYL, TSAQIEFLGPPLVIIGIIVYLWP, ILLGAVGTLSFAATLFNFI, TLINGIILVPLGLFAIYAL, IAFFGIIALFVVSLVLLGLMWTL, and MDLGVILLLWGVAIQLYHY. 2 residues coordinate heme: His87 and His101. The heme site is built by His198 and His212.

This sequence belongs to the cytochrome b family. In terms of assembly, it is a component of at least 2 distinct terminal oxidases, the quinol oxidase (SoxABC) and the alternate quinol oxidase with the core components SoxM and a Rieske Fe-S protein.

The protein resides in the cell membrane. Functionally, binds 2 heme groups (b586 and b606) which are not covalently bound to the protein. This chain is Cytochrome b (soxC), found in Sulfolobus acidocaldarius (strain ATCC 33909 / DSM 639 / JCM 8929 / NBRC 15157 / NCIMB 11770).